A 131-amino-acid chain; its full sequence is Increased copper sensitivity protein 3 (131 aa).

Helical transmembrane passes span 35–55 (ISVLHLLIATLCTIFFPIFFS) and 74–94 (IALTMSFPLNAIPGMYLIIAF).

It localises to the membrane. In Saccharomyces cerevisiae (strain ATCC 204508 / S288c) (Baker's yeast), this protein is Increased copper sensitivity protein 3 (ICS3).